Consider the following 1007-residue polypeptide: Serine/threonine-protein kinase PRP4 homolog (1007 aa).

A compositionally biased stretch (polar residues) spans 1 to 10 (MAAAETQSLR). The disordered stretch occupies residues 1 to 99 (MAAAETQSLR…EGMSPAKRTK (99 aa)). Position 2 is an N-acetylalanine (Ala2). 4 positions are modified to phosphoserine: Ser8, Ser20, Ser23, and Ser32. Composition is skewed to basic residues over residues 39–59 (KHSRHKKKKHKHRSKHKKHKH) and 67–81 (KKHKHKHKHKKHKRK). Residues 82–91 (EIIDASDKEG) are compositionally biased toward basic and acidic residues. Ser87 and Ser93 each carry phosphoserine. At Lys99 the chain carries N6-acetyllysine; alternate. Lys99 participates in a covalent cross-link: Glycyl lysine isopeptide (Lys-Gly) (interchain with G-Cter in SUMO2); alternate. Residue Lys111 forms a Glycyl lysine isopeptide (Lys-Gly) (interchain with G-Cter in SUMO2) linkage. Residue Lys117 forms a Glycyl lysine isopeptide (Lys-Gly) (interchain with G-Cter in SUMO2); alternate linkage. Lys117 is covalently cross-linked (Glycyl lysine isopeptide (Lys-Gly) (interchain with G-Cter in SUMO1); alternate). Residue Ser131 is modified to Phosphoserine. Tyr140 carries the post-translational modification Phosphotyrosine. 2 disordered regions span residues 140 to 533 (YESG…EEED) and 559 to 583 (SNMSVPSEPSSPQSSTRTRSPSPDD). 3 positions are modified to phosphoserine: Ser142, Ser144, and Ser166. Low complexity predominate over residues 157–168 (GNRSSTRSSSTK). Glycyl lysine isopeptide (Lys-Gly) (interchain with G-Cter in SUMO2) cross-links involve residues Lys170 and Lys177. 2 stretches are compositionally biased toward basic residues: residues 179-202 (TTKKRSKSRSKERTRHRSDKKKSK) and 214-230 (RSKSKERKKSKSPSKRS). Ser239, Ser241, Ser257, Ser277, Ser283, Ser292, and Ser294 each carry phosphoserine. Residues 247 to 270 (RSQEKIGKARSPTDDKVKIEDKSK) show a composition bias toward basic and acidic residues. Over residues 302-315 (SKDRRSRSKERKSK) the composition is skewed to basic residues. Positions 316 to 325 (RSETDKEKKP) are enriched in basic and acidic residues. A phosphoserine mark is found at Ser328, Ser354, Ser356, Ser366, and Ser368. The segment covering 342–367 (PSRRPGRSPKRRSLSPKPRDKSRRSR) has biased composition (basic residues). Thr385 carries the post-translational modification Phosphothreonine. At Ser387 the chain carries Phosphoserine. Composition is skewed to basic and acidic residues over residues 395–408 (RSLERKRREPERRR) and 415–429 (RPRDDILSRRERSKD). Phosphoserine occurs at positions 427, 431, and 437. The segment covering 438–497 (PTRRRSRSPIRRRSRSPLRRSRSPRRRSRSPRRRDRGRRSRSRLRRRSRSRGGRRRRSRS) has biased composition (basic residues). Phosphoserine occurs at positions 518, 519, 520, 565, 569, 578, and 580. Acidic residues predominate over residues 518–533 (SSSDDNLEDFDVEEED). A compositionally biased stretch (low complexity) spans 562-581 (SVPSEPSSPQSSTRTRSPSP). Residues Lys593 and Lys659 each participate in a glycyl lysine isopeptide (Lys-Gly) (interchain with G-Cter in SUMO2) cross-link. Positions 687–1006 (YNVYGYTGQG…ALQHAFIQEK (320 aa)) constitute a Protein kinase domain. ATP is bound by residues 693–701 (TGQGVFSNV) and Lys717. Lys717 carries the N6-acetyllysine modification. The Proton acceptor role is filled by Asp815. Position 849 is a phosphotyrosine (Tyr849). Ser852 is subject to Phosphoserine.

Belongs to the protein kinase superfamily. CMGC Ser/Thr protein kinase family. Interacts with CLK1 C-terminus. Associates with the U5 snRNP and NCOR1 deacetylase complexes. Identified in the spliceosome C complex. Post-translationally, phosphorylated by CLK1. Autophosphorylated; phosphorylation inhibits interaction with its targets, such as PRPF6 or SMARCA4. As to expression, ubiquitous.

It localises to the nucleus. The protein resides in the chromosome. It is found in the centromere. The protein localises to the kinetochore. It carries out the reaction L-seryl-[protein] + ATP = O-phospho-L-seryl-[protein] + ADP + H(+). The enzyme catalyses L-threonyl-[protein] + ATP = O-phospho-L-threonyl-[protein] + ADP + H(+). Its function is as follows. Serine/threonine kinase involved in spliceosomal assembly as well as mitosis and signaling regulation. Connects chromatin mediated regulation of transcription and pre-mRNA splicing. During spliceosomal assembly, interacts with and phosphorylates PRPF6 and PRPF31, components of the U4/U6-U5 tri-small nuclear ribonucleoprotein (snRNP), to facilitate the formation of the spliceosome B complex. Plays a role in regulating transcription and the spindle assembly checkpoint (SAC). Associates with U5 snRNP and NCOR1 deacetylase complexes which may allow a coordination of pre-mRNA splicing with chromatin remodeling events involved in transcriptional regulation. Associates and probably phosphorylates SMARCA4 and NCOR1. Phosphorylates SRSF1. Associates with kinetochores during mitosis and is necessary for recruitment and maintenance of the checkpoint proteins such as MAD1L1 and MAD12L1 at the kinetochores. Phosphorylates and regulates the activity of the transcription factors such as ELK1 and KLF13. Phosphorylates nuclear YAP1 and WWTR1/TAZ which induces nuclear exclusion and regulates Hippo signaling pathway, involved in tissue growth control. The chain is Serine/threonine-protein kinase PRP4 homolog from Homo sapiens (Human).